Reading from the N-terminus, the 298-residue chain is MDQKQIEEIVRSVMASMGQDVPQPVAPSKQEGAKPQCASPTVTESCALDLGSAEAKAWIGVENPHRADVLTELRRSTAARVCTGRAGPRPRTQALLRFLADHSRSKDTVLKEVPEEWVKAQGLLEVRSEISDKNLYLTRPDMGRRLSPEAIDALKSQCVMNPDVQVVVSDGLSTDAITANYEEILPPLLAGLKQAGLNVGTPFFVRYGRVKIEDQIGEILGAKVVILLVGERPGLGQSESLSCYAVYSPRVATTVEADRTCISNIHQGGTPPVEAAAVIVDLAKRMLEQKASGINMTR.

A disordered region spans residues 17–37; sequence MGQDVPQPVAPSKQEGAKPQC. Adenosylcob(III)alamin is bound by residues valine 210, glutamate 231, and cysteine 261.

Belongs to the EutC family. In terms of assembly, the basic unit is a heterodimer which dimerizes to form tetramers. The heterotetramers trimerize; 6 large subunits form a core ring with 6 small subunits projecting outwards. Adenosylcob(III)alamin serves as cofactor.

It is found in the bacterial microcompartment. It carries out the reaction ethanolamine = acetaldehyde + NH4(+). It functions in the pathway amine and polyamine degradation; ethanolamine degradation. Catalyzes the deamination of various vicinal amino-alcohols to oxo compounds. Allows this organism to utilize ethanolamine as the sole source of nitrogen and carbon in the presence of external vitamin B12. The protein is Ethanolamine ammonia-lyase small subunit of Salmonella paratyphi A (strain ATCC 9150 / SARB42).